Here is a 734-residue protein sequence, read N- to C-terminus: Photosystem I P700 chlorophyll a apoprotein A2 (734 aa).

8 helical membrane passes run 46–69, 135–158, 175–199, 273–291, 330–353, 369–395, 417–439, and 517–535; these read IFASHFGQLAIIFLWTSGNLFHVA, LYTGALFLLFLSTLSLIAGWLHLQ, LNHHLSGLFGVSSLAWTGHLVHVAI, MAHHHLAIAFIFLIAGHMY, IHFQLGLALASLGVITSLVAQHMY, AALYTHHQYIAGFIMTGAFAHGAIFFI, AIISHLSWASLFLGFHTLGLYVH, and FLVHHAIALGLHTTTLILV. Positions 559 and 568 each coordinate [4Fe-4S] cluster. 2 consecutive transmembrane segments (helical) span residues 575–596 and 643–665; these read AFYLAVFWMLNTIGWVTFYWHW and LSVWAWMFLFGHLVWATGFMFLI. Chlorophyll a-binding residues include His-654, Met-662, and Tyr-670. A phylloquinone-binding site is contributed by Trp-671. The chain crosses the membrane as a helical span at residues 707 to 727; that stretch reads LVGLAHFSVGYIFTYAAFLIA.

It belongs to the PsaA/PsaB family. The PsaA/B heterodimer binds the P700 chlorophyll special pair and subsequent electron acceptors. PSI consists of a core antenna complex that captures photons, and an electron transfer chain that converts photonic excitation into a charge separation. The eukaryotic PSI reaction center is composed of at least 11 subunits. Requires P700 is a chlorophyll a/chlorophyll a' dimer, A0 is one or more chlorophyll a, A1 is one or both phylloquinones and FX is a shared 4Fe-4S iron-sulfur center. as cofactor.

The protein localises to the plastid. It is found in the chloroplast thylakoid membrane. The enzyme catalyses reduced [plastocyanin] + hnu + oxidized [2Fe-2S]-[ferredoxin] = oxidized [plastocyanin] + reduced [2Fe-2S]-[ferredoxin]. PsaA and PsaB bind P700, the primary electron donor of photosystem I (PSI), as well as the electron acceptors A0, A1 and FX. PSI is a plastocyanin-ferredoxin oxidoreductase, converting photonic excitation into a charge separation, which transfers an electron from the donor P700 chlorophyll pair to the spectroscopically characterized acceptors A0, A1, FX, FA and FB in turn. Oxidized P700 is reduced on the lumenal side of the thylakoid membrane by plastocyanin. This chain is Photosystem I P700 chlorophyll a apoprotein A2, found in Triticum aestivum (Wheat).